Reading from the N-terminus, the 184-residue chain is Large ribosomal subunit protein uL5c (184 aa).

This sequence belongs to the universal ribosomal protein uL5 family. Part of the 50S ribosomal subunit; contacts the 5S rRNA.

It is found in the plastid. The protein resides in the chloroplast. In terms of biological role, binds 5S rRNA, forms part of the central protuberance of the 50S subunit. The chain is Large ribosomal subunit protein uL5c (rpl5) from Nephroselmis olivacea (Green alga).